The sequence spans 151 residues: Peptide methionine sulfoxide reductase MsrB (151 aa).

The MsrB domain maps to 5–127 (KEERLKQLTR…NSAALRFVPK (123 aa)). The Nucleophile role is filled by Cys116.

Belongs to the MsrB Met sulfoxide reductase family.

The catalysed reaction is L-methionyl-[protein] + [thioredoxin]-disulfide + H2O = L-methionyl-(R)-S-oxide-[protein] + [thioredoxin]-dithiol. The sequence is that of Peptide methionine sulfoxide reductase MsrB from Bacillus licheniformis (strain ATCC 14580 / DSM 13 / JCM 2505 / CCUG 7422 / NBRC 12200 / NCIMB 9375 / NCTC 10341 / NRRL NRS-1264 / Gibson 46).